Here is a 515-residue protein sequence, read N- to C-terminus: Phenylalanine--tRNA ligase beta subunit (515 aa).

The B5 domain maps to 263-334; the sequence is HEYVKIYVDE…IVMGYNQMPR (72 aa). Mg(2+) is bound by residues Asn-312, Asp-318, Glu-321, and Asp-322.

The protein belongs to the phenylalanyl-tRNA synthetase beta subunit family. Type 2 subfamily. Tetramer of two alpha and two beta subunits. Mg(2+) is required as a cofactor.

The protein localises to the cytoplasm. It carries out the reaction tRNA(Phe) + L-phenylalanine + ATP = L-phenylalanyl-tRNA(Phe) + AMP + diphosphate + H(+). The protein is Phenylalanine--tRNA ligase beta subunit of Pyrobaculum aerophilum (strain ATCC 51768 / DSM 7523 / JCM 9630 / CIP 104966 / NBRC 100827 / IM2).